The sequence spans 57 residues: DNA-directed RNA polymerase subunit Rpo6 (57 aa).

Belongs to the archaeal Rpo6/eukaryotic RPB6 RNA polymerase subunit family. Part of the RNA polymerase complex.

The protein resides in the cytoplasm. It catalyses the reaction RNA(n) + a ribonucleoside 5'-triphosphate = RNA(n+1) + diphosphate. In terms of biological role, DNA-dependent RNA polymerase (RNAP) catalyzes the transcription of DNA into RNA using the four ribonucleoside triphosphates as substrates. The protein is DNA-directed RNA polymerase subunit Rpo6 of Haloarcula marismortui (strain ATCC 43049 / DSM 3752 / JCM 8966 / VKM B-1809) (Halobacterium marismortui).